The primary structure comprises 233 residues: 7-cyano-7-deazaguanine synthase (233 aa).

11 to 21 (FSGGQDSTTCL) contributes to the ATP binding site. 4 residues coordinate Zn(2+): Cys199, Cys214, Cys217, and Cys220.

The protein belongs to the QueC family. Zn(2+) serves as cofactor.

The catalysed reaction is 7-carboxy-7-deazaguanine + NH4(+) + ATP = 7-cyano-7-deazaguanine + ADP + phosphate + H2O + H(+). Its pathway is purine metabolism; 7-cyano-7-deazaguanine biosynthesis. Catalyzes the ATP-dependent conversion of 7-carboxy-7-deazaguanine (CDG) to 7-cyano-7-deazaguanine (preQ(0)). The protein is 7-cyano-7-deazaguanine synthase of Herminiimonas arsenicoxydans.